The chain runs to 515 residues: Calcium-dependent protein kinase 2 (515 aa).

Positions 1–51 are disordered; the sequence is MGNCCPGSGDAEPASSDASTGNGSSSFKAGASPSSAPAQNKPPAPIGPVLG. A lipid anchor (N-myristoyl glycine) is attached at Gly-2. Residues 14–38 are compositionally biased toward low complexity; that stretch reads ASSDASTGNGSSSFKAGASPSSAPA. The Protein kinase domain maps to 61 to 319; sequence YTIGKELGRG…AYEVLNHPWI (259 aa). Residues 67 to 75 and Lys-90 each bind ATP; that span reads LGRGQFGVT. Asp-185 (proton acceptor) is an active-site residue. Residues 325–355 are autoinhibitory domain; that stretch reads APDTPLDNAVMNRLKQFRAMNQFKKAALRVI. EF-hand domains follow at residues 362 to 397, 398 to 433, 434 to 469, and 473 to 504; these read EEIR…QGTK, LTEA…MNRM, DREE…KGLL, and DIKD…GNPE. Positions 375, 377, 379, 381, 386, 411, 413, 415, 417, 422, 447, 449, 451, 453, 458, 482, 484, 486, 488, and 493 each coordinate Ca(2+).

Belongs to the protein kinase superfamily. Ser/Thr protein kinase family. CDPK subfamily. As to expression, expressed in heading panicles, spikelets and mature pollen grains.

Its subcellular location is the membrane. The enzyme catalyses L-seryl-[protein] + ATP = O-phospho-L-seryl-[protein] + ADP + H(+). The catalysed reaction is L-threonyl-[protein] + ATP = O-phospho-L-threonyl-[protein] + ADP + H(+). Its activity is regulated as follows. Activated by calcium. Autophosphorylation may play an important role in the regulation of the kinase activity. Its function is as follows. May play a role in signal transduction pathways that involve calcium as a second messenger. The chain is Calcium-dependent protein kinase 2 from Oryza sativa subsp. japonica (Rice).